We begin with the raw amino-acid sequence, 258 residues long: GCN5-related N-acetyltransferase 2, chloroplastic (258 aa).

The N-terminal 58 residues, 1 to 58 (MLLIPISSSSSSSISPPPNSYPSNHHSLFFSNLTFPIQHGSRKLKTLRLRANFWESIR), are a transit peptide targeting the chloroplast. An interaction with begomoviruses NSP protein region spans residues 107-194 (IIFSSGGEID…DHAFNATIWD (88 aa)). One can recognise an N-acetyltransferase domain in the interval 107–258 (IIFSSGGEID…GIKGMFWYPK (152 aa)). Acetyl-CoA contacts are provided by residues 195–197 (VLV), 203–208 (GQGLGK), 231–233 (DSQ), and Y238. Y238 functions as the Proton donor in the catalytic mechanism.

The protein belongs to the acetyltransferase family. GNAT subfamily. In terms of assembly, oligomer. Interacts with begomoviruses NSP but not with CP. This interaction may allow NSP to recruit NSI monomers to acetylate viral genome-bound CP and thus regulate nuclear export of viral genome by NSP. S-sulfhydrated and activated by hydrogen sulfide H(2)S to promote melatonin accumulation and subsequent melatonin-dependent stomotal closure to combat osmotic stress. In terms of processing, autoacetylated. In terms of tissue distribution, highly expressed in cauline leaves and seeds, at lower levels in stems, siliques, inflorescences and rosettes leaves and at very low levels in roots. Expressed in the xylem parenchyma and phloem of the leaves and root, and in guard cells of young leaves.

Its subcellular location is the plastid. The protein resides in the chloroplast. The enzyme catalyses 5-methoxytryptamine + acetyl-CoA = melatonin + CoA + H(+). It carries out the reaction L-lysyl-[histone] + acetyl-CoA = N(6)-acetyl-L-lysyl-[histone] + CoA + H(+). It catalyses the reaction L-lysyl-[protein] + acetyl-CoA = N(6)-acetyl-L-lysyl-[protein] + CoA + H(+). The catalysed reaction is serotonin + acetyl-CoA = N-acetylserotonin + CoA + H(+). The enzyme catalyses N-terminal L-alanyl-[protein] + acetyl-CoA = N-terminal N(alpha)-acetyl-L-alanyl-[protein] + CoA + H(+). It carries out the reaction N-terminal L-seryl-[protein] + acetyl-CoA = N-terminal N(alpha)-acetyl-L-seryl-[protein] + CoA + H(+). It catalyses the reaction N-terminal L-valyl-[protein] + acetyl-CoA = N-terminal N(alpha)-acetyl-L-valyl-[protein] + CoA + H(+). The catalysed reaction is N-terminal glycyl-[protein] + acetyl-CoA = N-terminal N(alpha)-acetylglycyl-[protein] + CoA + H(+). The enzyme catalyses an N-terminal L-alpha-aminoacyl-[protein] + acetyl-CoA = N-terminal N(alpha)-acetyl-L-alpha-aminoacyl-[protein] + CoA + H(+). It carries out the reaction N-terminal L-threonyl-[protein] + acetyl-CoA = N-terminal N(alpha)-acetyl-L-threonyl-[protein] + CoA + H(+). It catalyses the reaction N-terminal L-methionyl-[protein] + acetyl-CoA = N-terminal N(alpha)-acetyl-L-methionyl-[protein] + CoA + H(+). The catalysed reaction is N-terminal L-leucyl-[protein] + acetyl-CoA = N-terminal N(alpha)-acetyl-L-leucyl-[protein] + CoA + H(+). Inhibited by the viral nuclear shuttle protein (NSP) that binds to the region required for oligomerization. Its function is as follows. Protein acetyltransferase with dual specificity triggering both N-alpha-acetylation (NTA), with a preference for alanine, serine, threonine, methionine and to a lower extent valine as substrates (can also use glycine and leucine), and epsilon-lysine acetylation (KA) of several plastid proteins. Triggers lysine acetylation in KEA1 and KEA2. Acetylates in vitro histones H2A and H3. Does not act as a transcriptional activator but required for the dynamic reorganization of thylakoid protein complexes and grana during photosynthetic state transitions. Involved in melatonin biosynthesis by catalyzing the formation of N-acetylserotonin (NAS) from serotonin and of melatonin (N-acetyl-5-methoxytryptamine) from 5-methoxytryptamine (5-MT). By triggering melatonin biosynthesis, contributes to the chloroplast protein quality control (CPQC), which plays a pivotal role in starch synthesis, and confers melatonin-associated tolerance to high light (HL) stress. Prevents the accumulation of oil and anthocyanin content in mature seeds and avoids seed germination in a melatonin-dependent manner, but promotes mucilage production in the seed coat. Contributes to melatonin-mediated anthocyanin production in cold-exposed seedlings. Implicated in melatonin-monitored circadian dynamics of stomatal aperture to minimize night water loss and promote drought tolerance, partly by triggering hydrogen sulfide H(2)S-dependent stomotal closure in response to osmotic stress. In terms of biological role, (Microbial infection) Required for begomovirus infection and systemic spread. In case of begomoviruses infection, acetylates the capsid protein (CP), but not the nuclear shuttle protein (NSP). Stimulates melatonin-triggered defense responses to the necrotrophic Botrytis cinerea. This is GCN5-related N-acetyltransferase 2, chloroplastic from Arabidopsis thaliana (Mouse-ear cress).